The primary structure comprises 423 residues: Innexin eat-5 (423 aa).

The next 4 membrane-spanning stretches (helical) occupy residues 25 to 41 (YYYSTLIIMGMSLTITA), 102 to 122 (PFIMAIEAAFFYLPVIFWSML), 277 to 297 (IFLFLYIWFLLVFFVTLFDSI), and 341 to 361 (HSILLSEFCLHKFTPDIIILL).

This sequence belongs to the pannexin family. As to quaternary structure, heterooligomer of eat-5 and another innexin. As to expression, expressed in pharyngeal muscles.

It localises to the cell membrane. The protein resides in the cell junction. The protein localises to the gap junction. Its function is as follows. Structural component of the gap junctions. Required for synchronized pharyngeal muscle contractions. The polypeptide is Innexin eat-5 (eat-5) (Caenorhabditis elegans).